The chain runs to 150 residues: MGIQHEFDIIINGDIALRNLQLHRGDNYGCKLKIISNDYKKLKLRFVIRPDWSEIDEVKGLTVFANNYAVKVNKVDYTLYYVIYEAVIHLYNKKTEILIYSDDENELFKHYYPYISLNMISKKYKIKEENYSSPYIEHPLIPYRDYESMD.

This sequence belongs to the orthopoxvirus OPG027 family.

Functionally, plays a role for multiplication of the virus in different cell types. This chain is Interferon antagonist OPG027 (OPG027), found in Cynomys gunnisoni (Gunnison's prairie dog).